A 200-amino-acid chain; its full sequence is Glycerol-3-phosphate acyltransferase (200 aa).

Transmembrane regions (helical) follow at residues 2–22 (FNIPAVAVSYLIGSLSFAVIV), 51–71 (KAAALTLLGDAAKGLVAVLLA), 84–104 (AIAAVALAALVGHMWPVFFGF), 114–134 (LGVLLALSPATALVCALIWLV), and 159–179 (FFMPHVSWVWATVAIALLVLF).

It belongs to the PlsY family. In terms of assembly, probably interacts with PlsX.

The protein localises to the cell inner membrane. The enzyme catalyses an acyl phosphate + sn-glycerol 3-phosphate = a 1-acyl-sn-glycero-3-phosphate + phosphate. It participates in lipid metabolism; phospholipid metabolism. Catalyzes the transfer of an acyl group from acyl-phosphate (acyl-PO(4)) to glycerol-3-phosphate (G3P) to form lysophosphatidic acid (LPA). This enzyme utilizes acyl-phosphate as fatty acyl donor, but not acyl-CoA or acyl-ACP. The polypeptide is Glycerol-3-phosphate acyltransferase (Neisseria meningitidis serogroup B (strain ATCC BAA-335 / MC58)).